A 33-amino-acid polypeptide reads, in one-letter code: U23-ctenitoxin-Pn1a (33 aa).

3 disulfides stabilise this stretch: cysteine 3–cysteine 16, cysteine 10–cysteine 21, and cysteine 15–cysteine 30.

Expressed by the venom gland.

The protein localises to the secreted. Functionally, non-toxic to mice. This chain is U23-ctenitoxin-Pn1a, found in Phoneutria nigriventer (Brazilian armed spider).